We begin with the raw amino-acid sequence, 413 residues long: Elongation factor 1-alpha (413 aa).

One can recognise a tr-type G domain in the interval 5–211; that stretch reads KTHMNLAFIG…DALDEPDKPV (207 aa). The interval 14-21 is G1; the sequence is GHVDHGKS. 14 to 21 lines the GTP pocket; that stretch reads GHVDHGKS. Residue Ser-21 participates in Mg(2+) binding. The tract at residues 60-64 is G2; that stretch reads GVTID. The G3 stretch occupies residues 81–84; the sequence is DCPG. GTP contacts are provided by residues 81–85 and 136–139; these read DCPGH and NKMD. The interval 136–139 is G4; that stretch reads NKMD. Positions 175-177 are G5; it reads SAF.

It belongs to the TRAFAC class translation factor GTPase superfamily. Classic translation factor GTPase family. EF-Tu/EF-1A subfamily.

It localises to the cytoplasm. The catalysed reaction is GTP + H2O = GDP + phosphate + H(+). In terms of biological role, GTP hydrolase that promotes the GTP-dependent binding of aminoacyl-tRNA to the A-site of ribosomes during protein biosynthesis. This Methanosphaera stadtmanae (strain ATCC 43021 / DSM 3091 / JCM 11832 / MCB-3) protein is Elongation factor 1-alpha.